A 306-amino-acid polypeptide reads, in one-letter code: Large ribosomal subunit protein uL2m (306 aa).

Residues 1-60 (MALCALTSALRSLSLASAAITARVPTLLPAAQIQSNVLLQLPPALVSPSYRPVHMSADRS) constitute a mitochondrion transit peptide.

The protein belongs to the universal ribosomal protein uL2 family. Component of the mitochondrial ribosome large subunit (39S) which comprises a 16S rRNA and about 50 distinct proteins.

It localises to the mitochondrion. The sequence is that of Large ribosomal subunit protein uL2m (Mrpl2) from Mus musculus (Mouse).